We begin with the raw amino-acid sequence, 490 residues long: MEEEGVKEAGEKPRGAQMVDKAGWIKKSSGGLLGFWKDRYLLLCQAQLLVYENEDDQKCVETVELGSYEKCQDLRALLKRKHRFILLRSPGNKVSDIKFQAPTGEEKESWIKALNEGINRGKNKAFDEVKVDKSCALEHVTRDRVRGGQRRRPPTRVHLKEVASAASDGLLRLDLDVPDSGPPVFAPSNHVSEAQPRETPRPLMPPTKPFLAPETTSPGDRVETPVGERAPTPVSASSEVSPESQEDSETPAEEDSGSEQPPNSVLPDKLKVSWENPSPQEAPAAESAEPSQAPCSETSEAAPREGGKPPTPPPKILSEKLKASMGEMQASGPPAPGTVQVSVNGMDDSPEPAKPSQAEGTPGTPPKDATTSTALPPWDLPPQFHPRCSSLGDLLGEGPRHPLQPRERLYRAQLEVKVASEQTEKLLNKVLGSEPAPVSAETLLSQAVEQLRQATQVLQEMRDLGELSQEAPGLREKRKELVTLYRRSAP.

Residues 18–119 form the PH domain; the sequence is MVDKAGWIKK…WIKALNEGIN (102 aa). Residues Ser-164 and Ser-167 each carry the phosphoserine modification. A disordered region spans residues 173–402; the sequence is LDLDVPDSGP…DLLGEGPRHP (230 aa). The segment covering 230–243 has biased composition (low complexity); sequence APTPVSASSEVSPE. A Phosphothreonine modification is found at Thr-232. 3 positions are modified to phosphoserine: Ser-235, Ser-237, and Ser-238. A compositionally biased stretch (acidic residues) spans 244–257; that stretch reads SQEDSETPAEEDSG. At Ser-273 the chain carries Phosphoserine. The span at 277–297 shows a compositional bias: low complexity; sequence PSPQEAPAAESAEPSQAPCSE. A phosphothreonine mark is found at Thr-298 and Thr-311. Ser-390 and Ser-468 each carry phosphoserine. Residues 439 to 481 adopt a coiled-coil conformation; that stretch reads SAETLLSQAVEQLRQATQVLQEMRDLGELSQEAPGLREKRKEL.

The chain is Pleckstrin homology domain-containing family O member 2 (PLEKHO2) from Homo sapiens (Human).